The primary structure comprises 1179 residues: ATP-dependent helicase/deoxyribonuclease subunit B (1179 aa).

Belongs to the helicase family. AddB/RexB type 2 subfamily. In terms of assembly, heterodimer of AddA and RexB. Mg(2+) is required as a cofactor.

Its function is as follows. The heterodimer acts as both an ATP-dependent DNA helicase and an ATP-dependent, dual-direction single-stranded exonuclease. Recognizes the chi site generating a DNA molecule suitable for the initiation of homologous recombination. This subunit has 5' -&gt; 3' nuclease activity but not helicase activity. The sequence is that of ATP-dependent helicase/deoxyribonuclease subunit B from Lacticaseibacillus casei (strain BL23) (Lactobacillus casei).